The chain runs to 155 residues: Small ribosomal subunit protein uS7c (155 aa).

Belongs to the universal ribosomal protein uS7 family. Part of the 30S ribosomal subunit.

It localises to the plastid. It is found in the chloroplast. Functionally, one of the primary rRNA binding proteins, it binds directly to 16S rRNA where it nucleates assembly of the head domain of the 30S subunit. The polypeptide is Small ribosomal subunit protein uS7c (rps7) (Cryptomeria japonica (Japanese cedar)).